Here is a 414-residue protein sequence, read N- to C-terminus: Transforming growth factor beta-2 proprotein (414 aa).

The N-terminal stretch at 1-20 (MHYCVLSAFLLLHLVTVALS) is a signal peptide. N-linked (GlcNAc...) asparagine glycans are attached at residues Asn-72, Asn-140, and Asn-241. Intrachain disulfides connect Cys-309/Cys-318, Cys-317/Cys-380, Cys-346/Cys-411, and Cys-350/Cys-413.

It belongs to the TGF-beta family. As to quaternary structure, interacts with the serine proteases, HTRA1 and HTRA3. Interacts with ASPN. Interacts with MFAP5. In terms of assembly, interacts with Transforming growth factor beta-2 (TGF-beta-2) chain; interaction is non-covalent and maintains (TGF-beta-2) in a latent state. Interacts with LRRC32/GARP; leading to regulate activation of TGF-beta-2. Interacts with NREP; the interaction results in a decrease in TGFB2 autoinduction. Transforming growth factor beta-2: Homodimer; disulfide-linked. Transforming growth factor beta-2: Interacts with TGF-beta receptors (TGFBR1 and TGFBR2), leading to signal transduction. Post-translationally, the precursor proprotein is cleaved in the Golgi apparatus to form Transforming growth factor beta-2 (TGF-beta-2) and Latency-associated peptide (LAP) chains, which remain non-covalently linked, rendering TGF-beta-2 inactive.

Its subcellular location is the secreted. It localises to the extracellular space. The protein resides in the extracellular matrix. Functionally, precursor of the Latency-associated peptide (LAP) and Transforming growth factor beta-2 (TGF-beta-2) chains, which constitute the regulatory and active subunit of TGF-beta-2, respectively. Its function is as follows. Required to maintain the Transforming growth factor beta-2 (TGF-beta-2) chain in a latent state during storage in extracellular matrix. Associates non-covalently with TGF-beta-2 and regulates its activation via interaction with 'milieu molecules', such as LTBP1 and LRRC32/GARP, that control activation of TGF-beta-2. Multifunctional protein that regulates various processes such as angiogenesis and heart development. Activation into mature form follows different steps: following cleavage of the proprotein in the Golgi apparatus, Latency-associated peptide (LAP) and Transforming growth factor beta-2 (TGF-beta-2) chains remain non-covalently linked rendering TGF-beta-2 inactive during storage in extracellular matrix. At the same time, LAP chain interacts with 'milieu molecules', such as LTBP1 and LRRC32/GARP, that control activation of TGF-beta-2 and maintain it in a latent state during storage in extracellular milieus. Once activated following release of LAP, TGF-beta-2 acts by binding to TGF-beta receptors (TGFBR1 and TGFBR2), which transduce signal. The chain is Transforming growth factor beta-2 proprotein (TGFB2) from Bos taurus (Bovine).